Consider the following 194-residue polypeptide: DPY30 domain-containing protein 2 (194 aa).

Residues 126–172 form a disordered region; sequence EAFEKEPLKQESLPGTSDMIPGMPQQSPSSEPSVSSQVDLNTGTPQE. Residues 149-163 show a composition bias toward low complexity; that stretch reads PQQSPSSEPSVSSQV.

It belongs to the dpy-30 family.

This Bos taurus (Bovine) protein is DPY30 domain-containing protein 2 (DYDC2).